The primary structure comprises 139 residues: Putative pre-16S rRNA nuclease (139 aa).

The protein belongs to the YqgF nuclease family.

Its subcellular location is the cytoplasm. Its function is as follows. Could be a nuclease involved in processing of the 5'-end of pre-16S rRNA. The sequence is that of Putative pre-16S rRNA nuclease from Streptococcus pyogenes serotype M2 (strain MGAS10270).